A 404-amino-acid chain; its full sequence is MKLPIYFDYSATCPVDPRVAEKMVQCMTMDGNFGNPASRSHRYGWQAEESVDNAREQIADLLNADPREIVFTSGATESDNLAIKGAAHFYEKKGKHVITCKTEHKAVLDPCRQLEREGFEVTYLEPEANGIIDLDKLQAAMREDTVLVSIMHVNNEIGVIQDIGAIGELCRARKIIFHVDAAQSAGKIPLDVKEMKVDLISMSAHKAYGPKGIGALYVRRKPRIRLEAQMHGGGHERGFRSGTLATHQIVGMGEAFAIAKQDMQKDYDHALALRERLLKGVQDLEAVTVNGDLDQRVPHNLNVSFAFVEGESLLMSLKDLAVSSGSACTSASLEPSYVLRALGLNDELAHSSVRFSFGRFTTEEEIDYAIAQIRVAVNKLRDMSPLWDMYKEGIDLNTVEWAHH.

Pyridoxal 5'-phosphate-binding positions include 75–76 (AT), N155, Q183, and 203–205 (SAH). K206 carries the post-translational modification N6-(pyridoxal phosphate)lysine. Residue T243 participates in pyridoxal 5'-phosphate binding. The active-site Cysteine persulfide intermediate is the C328. C328 is a [2Fe-2S] cluster binding site.

It belongs to the class-V pyridoxal-phosphate-dependent aminotransferase family. NifS/IscS subfamily. Homodimer. Forms a heterotetramer with IscU, interacts with other sulfur acceptors. Pyridoxal 5'-phosphate is required as a cofactor.

The protein resides in the cytoplasm. It catalyses the reaction (sulfur carrier)-H + L-cysteine = (sulfur carrier)-SH + L-alanine. Its pathway is cofactor biosynthesis; iron-sulfur cluster biosynthesis. Its function is as follows. Master enzyme that delivers sulfur to a number of partners involved in Fe-S cluster assembly, tRNA modification or cofactor biosynthesis. Catalyzes the removal of elemental sulfur atoms from cysteine to produce alanine. Functions as a sulfur delivery protein for Fe-S cluster synthesis onto IscU, an Fe-S scaffold assembly protein, as well as other S acceptor proteins. The polypeptide is Cysteine desulfurase IscS (Vibrio atlanticus (strain LGP32) (Vibrio splendidus (strain Mel32))).